The following is a 273-amino-acid chain: Undecaprenyl-diphosphatase (273 aa).

Helical transmembrane passes span 6–26 (SLLI…LPVS), 45–65 (AKTF…VMFW), 90–110 (LTLI…LVFH), 116–136 (LFNP…LIAA), 190–210 (YAAS…ATVL), 222–242 (ADIP…LIAI), and 252–272 (ISFI…YVVF).

It belongs to the UppP family.

It is found in the cell inner membrane. The catalysed reaction is di-trans,octa-cis-undecaprenyl diphosphate + H2O = di-trans,octa-cis-undecaprenyl phosphate + phosphate + H(+). Functionally, catalyzes the dephosphorylation of undecaprenyl diphosphate (UPP). Confers resistance to bacitracin. The chain is Undecaprenyl-diphosphatase from Salmonella arizonae (strain ATCC BAA-731 / CDC346-86 / RSK2980).